The following is a 189-amino-acid chain: Elongation factor P (189 aa).

Belongs to the elongation factor P family.

It is found in the cytoplasm. It participates in protein biosynthesis; polypeptide chain elongation. Involved in peptide bond synthesis. Stimulates efficient translation and peptide-bond synthesis on native or reconstituted 70S ribosomes in vitro. Probably functions indirectly by altering the affinity of the ribosome for aminoacyl-tRNA, thus increasing their reactivity as acceptors for peptidyl transferase. The polypeptide is Elongation factor P (Pseudomonas putida (strain GB-1)).